We begin with the raw amino-acid sequence, 582 residues long: Threonine--tRNA ligase (582 aa).

A catalytic region spans residues 185–478 (DHRKLGKELE…LTEQYGGAFP (294 aa)). Zn(2+)-binding residues include Cys-278, His-329, and His-455.

Belongs to the class-II aminoacyl-tRNA synthetase family. Homodimer. The cofactor is Zn(2+).

The protein resides in the cytoplasm. It catalyses the reaction tRNA(Thr) + L-threonine + ATP = L-threonyl-tRNA(Thr) + AMP + diphosphate + H(+). Functionally, catalyzes the attachment of threonine to tRNA(Thr) in a two-step reaction: L-threonine is first activated by ATP to form Thr-AMP and then transferred to the acceptor end of tRNA(Thr). Also edits incorrectly charged L-seryl-tRNA(Thr). This Dehalococcoides mccartyi (strain ATCC BAA-2266 / KCTC 15142 / 195) (Dehalococcoides ethenogenes (strain 195)) protein is Threonine--tRNA ligase.